Here is a 407-residue protein sequence, read N- to C-terminus: Methyltransferase/ribosomally synthesized type I borosin cyclic peptide precursor ceuMA2 (407 aa).

The tract at residues 1 to 246 (MATTKTGSLT…TTSTLYIPPR (246 aa)) is methyltransferase domain. Residues arginine 70, tyrosine 74, and tyrosine 96 contribute to the active site. Positions 96, 98, 101, 128, 170, 208, 239, and 240 each coordinate S-adenosyl-L-methionine. Residues 247-370 (EIAPVDQRIM…GPVYKVMRAT (124 aa)) form a clasp domain region. The interval 371-393 (PAAIAAGQEHSLDEIAGSADSES) is precursor leader. Residues threonine 399 and threonine 400 each carry the N-methylthreonine modification. An N-methylisoleucine modification is found at isoleucine 401. Residues valine 402 and valine 403 each carry the N-methylvaline modification. Isoleucine 404 is subject to N-methylisoleucine. N-methylvaline is present on valine 405. An N-methylhistidine modification is found at histidine 406.

This sequence in the N-terminal section; belongs to the precorrin methyltransferase family. Homodimer. In terms of processing, ceuMA2 automethylates at Thr-399, Thr-400, Ile-401, Val-402, Val-403, Ile-404, Val-405 and His-406 before being processed by a prolyloligopeptidase which likely forms a peptidyl ester upon removal of the follower propeptide, which then undergoes macrocyclization with the N-terminus of the modified core peptide. Peptide backbone alpha-N-methylations change the physicochemical properties of amide bonds to provide structural constraints and other favorable characteristics including biological membrane permeability to peptides.

It functions in the pathway secondary metabolite biosynthesis. Functionally, fusion protein of the methyltransferase ceuM2 and a type I borosin core peptide; part of the gene cluster that mediates the biosynthesis of a type I borosin, a highly methylated cyclic peptide with potent biological activities. Type I borosins derive from the C-terminus of the fusion protein, and it is the same protein that methylates its own C-terminus using S-adenosyl methionine (SAM). The C-terminus is subsequently cleaved off and macrocyclized by a prolyloligopeptidase to give the final product. In Cerrena unicolor (Canker rot fungus), this protein is Methyltransferase/ribosomally synthesized type I borosin cyclic peptide precursor ceuMA2.